A 201-amino-acid polypeptide reads, in one-letter code: Holliday junction branch migration complex subunit RuvA (201 aa).

Positions 1–64 are domain I; sequence MYEYIRGQFQ…EDFIGLYGFT (64 aa). The domain II stretch occupies residues 65 to 143; the sequence is TREELEMFKL…PDELTSEEGQ (79 aa). The interval 144-152 is flexible linker; the sequence is LIEGINDNS. Positions 153-201 are domain III; it reads DYSFNINETLSALMALGYTEKEAQKALEKVDKTLSIENMIKESLKLLMR.

It belongs to the RuvA family. As to quaternary structure, homotetramer. Forms an RuvA(8)-RuvB(12)-Holliday junction (HJ) complex. HJ DNA is sandwiched between 2 RuvA tetramers; dsDNA enters through RuvA and exits via RuvB. An RuvB hexamer assembles on each DNA strand where it exits the tetramer. Each RuvB hexamer is contacted by two RuvA subunits (via domain III) on 2 adjacent RuvB subunits; this complex drives branch migration. In the full resolvosome a probable DNA-RuvA(4)-RuvB(12)-RuvC(2) complex forms which resolves the HJ.

The protein resides in the cytoplasm. In terms of biological role, the RuvA-RuvB-RuvC complex processes Holliday junction (HJ) DNA during genetic recombination and DNA repair, while the RuvA-RuvB complex plays an important role in the rescue of blocked DNA replication forks via replication fork reversal (RFR). RuvA specifically binds to HJ cruciform DNA, conferring on it an open structure. The RuvB hexamer acts as an ATP-dependent pump, pulling dsDNA into and through the RuvAB complex. HJ branch migration allows RuvC to scan DNA until it finds its consensus sequence, where it cleaves and resolves the cruciform DNA. In Clostridium perfringens (strain 13 / Type A), this protein is Holliday junction branch migration complex subunit RuvA.